The primary structure comprises 946 residues: Bifunctional glutamine synthetase adenylyltransferase/adenylyl-removing enzyme (946 aa).

The tract at residues 1-440 is adenylyl removase; the sequence is MKPLSSPLQQ…VFNELIGDDE (440 aa). Residues 449 to 946 form an adenylyl transferase region; the sequence is SEQWRELWQD…ASWQKWLVEE (498 aa).

Belongs to the GlnE family. Mg(2+) serves as cofactor.

It catalyses the reaction [glutamine synthetase]-O(4)-(5'-adenylyl)-L-tyrosine + phosphate = [glutamine synthetase]-L-tyrosine + ADP. It carries out the reaction [glutamine synthetase]-L-tyrosine + ATP = [glutamine synthetase]-O(4)-(5'-adenylyl)-L-tyrosine + diphosphate. Its function is as follows. Involved in the regulation of glutamine synthetase GlnA, a key enzyme in the process to assimilate ammonia. When cellular nitrogen levels are high, the C-terminal adenylyl transferase (AT) inactivates GlnA by covalent transfer of an adenylyl group from ATP to specific tyrosine residue of GlnA, thus reducing its activity. Conversely, when nitrogen levels are low, the N-terminal adenylyl removase (AR) activates GlnA by removing the adenylyl group by phosphorolysis, increasing its activity. The regulatory region of GlnE binds the signal transduction protein PII (GlnB) which indicates the nitrogen status of the cell. The protein is Bifunctional glutamine synthetase adenylyltransferase/adenylyl-removing enzyme of Escherichia coli (strain K12 / MC4100 / BW2952).